A 229-amino-acid chain; its full sequence is Protein-lysine N-methyltransferase EFM4 (229 aa).

The protein belongs to the class I-like SAM-binding methyltransferase superfamily. EFM4 family.

It localises to the cytoplasm. It catalyses the reaction L-lysyl-[protein] + S-adenosyl-L-methionine = N(6)-methyl-L-lysyl-[protein] + S-adenosyl-L-homocysteine + H(+). The enzyme catalyses N(6)-methyl-L-lysyl-[protein] + S-adenosyl-L-methionine = N(6),N(6)-dimethyl-L-lysyl-[protein] + S-adenosyl-L-homocysteine + H(+). Functionally, S-adenosyl-L-methionine-dependent protein-lysine N-methyltransferase that mono- and dimethylates elongation factor 1-alpha (TEF1 and TEF2) at 'Lys-316'. May play a role in intracellular transport. The polypeptide is Protein-lysine N-methyltransferase EFM4 (Saccharomyces cerevisiae (strain ATCC 204508 / S288c) (Baker's yeast)).